Here is a 322-residue protein sequence, read N- to C-terminus: MFARQAFRCAQPLKQGFRKYSTEAPKGKSSLAPIYAAVGITGVGVGLYRYNSATAEAPAAVDRPKVFKGGDQGWFDLKLSEIEVLNHNTKRLRFEFEDKEALSGLQVASALLTKFKPADAKAVIRPYTPTSDEETPGYIDLVVKVYPNGPMSEHLHSMNVGQRLDFKGPIVKYPWETNKHNHICLIAGGTGITPMYQLAREIFKNPEDQTKVTLVFGNVKEEDILLKKEFEELENTYPRRFRAFYVLDNPPKEWTGGKGYISKELLKTVLPEPKEENIKIFVCGPPGMYKAISGTKNSPTDQGELSGILKELGYSKEQVFKF.

A helical transmembrane segment spans residues 31–48 (LAPIYAAVGITGVGVGLY). The FAD-binding FR-type domain occupies 72 to 176 (QGWFDLKLSE…KGPIVKYPWE (105 aa)). 179–214 (KHNHICLIAGGTGITPMYQLAREIFKNPEDQTKVTL) lines the FAD pocket.

Belongs to the flavoprotein pyridine nucleotide cytochrome reductase family. Requires FAD as cofactor.

Its subcellular location is the mitochondrion outer membrane. The enzyme catalyses 2 Fe(III)-[cytochrome b5] + NADH = 2 Fe(II)-[cytochrome b5] + NAD(+) + H(+). Functionally, may mediate the reduction of outer membrane cytochrome b5. The protein is NADH-cytochrome b5 reductase 2 (mcr1) of Aspergillus niger (strain ATCC MYA-4892 / CBS 513.88 / FGSC A1513).